The primary structure comprises 343 residues: Protein RecA (343 aa).

64–71 is a binding site for ATP; the sequence is GPESSGKT.

Belongs to the RecA family.

The protein localises to the cytoplasm. In terms of biological role, can catalyze the hydrolysis of ATP in the presence of single-stranded DNA, the ATP-dependent uptake of single-stranded DNA by duplex DNA, and the ATP-dependent hybridization of homologous single-stranded DNAs. It interacts with LexA causing its activation and leading to its autocatalytic cleavage. This chain is Protein RecA, found in Bacillus cereus (strain ATCC 14579 / DSM 31 / CCUG 7414 / JCM 2152 / NBRC 15305 / NCIMB 9373 / NCTC 2599 / NRRL B-3711).